Here is a 571-residue protein sequence, read N- to C-terminus: PHD and RING finger domain-containing protein C126.07c (571 aa).

The RING-type 1; atypical zinc finger occupies 18–79 (CIICLSNLPN…RVANTCPLCR (62 aa)). The PHD-type zinc-finger motif lies at 122–170 (TCRCVICGRSDHAEVLLLCDGCDDAYHTYCLNMDAVPIEEFYCPNCVLL). The segment at 125–168 (CVICGRSDHAEVLLLCDGCDDAYHTYCLNMDAVPIEEFYCPNCV) adopts an RING-type 2; degenerate zinc-finger fold. Over residues 305 to 324 (ATEATISNPRPSSGRFQQTP) the composition is skewed to polar residues. The interval 305 to 377 (ATEATISNPR…VLGNNSSSKS (73 aa)) is disordered. Residues 346–356 (RRQKRPTRRHI) are compositionally biased toward basic residues. Positions 359–377 (SNKSSGSSTVLGNNSSSKS) are enriched in polar residues.

It localises to the cytoplasm. The protein localises to the nucleus. This Schizosaccharomyces pombe (strain 972 / ATCC 24843) (Fission yeast) protein is PHD and RING finger domain-containing protein C126.07c.